Consider the following 229-residue polypeptide: Urease accessory protein UreG (229 aa).

24–31 (GPVGSGKT) is a binding site for GTP.

The protein belongs to the SIMIBI class G3E GTPase family. UreG subfamily. Homodimer. UreD, UreF and UreG form a complex that acts as a GTP-hydrolysis-dependent molecular chaperone, activating the urease apoprotein by helping to assemble the nickel containing metallocenter of UreC. The UreE protein probably delivers the nickel.

Its subcellular location is the cytoplasm. Facilitates the functional incorporation of the urease nickel metallocenter. This process requires GTP hydrolysis, probably effectuated by UreG. The sequence is that of Urease accessory protein UreG from Albidiferax ferrireducens (strain ATCC BAA-621 / DSM 15236 / T118) (Rhodoferax ferrireducens).